Reading from the N-terminus, the 554-residue chain is MTTPDLTGALFEIVARTAGRRPGGDAIALSPDMVVLERPRNRDHGDWATNIAMRIAKPLGESPRTIAADIAKALGELPQVAKVDVAGPGFINITLEAAAAGALAHTIVESGPAYGRGHSLEGIRINLEFVSANPTGPIHLGGVRWAAVGDSLARILQAEGADVTREYYFNDHGSQIDRFARSLLASHLGEETPEDGYGGAYIGEIAERVVEGYEGDIDALTREAQQEVFRKSGTELMFGEIKQKLHDFGVDFDVFFHEDSLHESGAVDRAIARLTELGHVFEEDGAIWLRTTTFGDDRDRVVIRSTGEPAYISGDLGYYLDKRERGFEQNIIMLGADHHGYVGRMMAMVEAFGDTPGVNLQILIGQMVNLLRDGEPVRMSKRAGTIVTLDDLVDAVGVDAGRYALVRSSADQNLDIDLAVLGKRTNDNPVFYVQYAHARTCAVDRNAAASGVDRSAFAPELLTHPTESALLGLLQEFPRIVAQAAELREPHRVARYVEELAGSYHRWYDSCRVVPRGDEEVTDLHRTRLWLNDAVRQVVANGLNLVGVSAPERM.

Residues 132 to 142 (ANPTGPIHLGG) carry the 'HIGH' region motif.

Belongs to the class-I aminoacyl-tRNA synthetase family. As to quaternary structure, monomer.

It localises to the cytoplasm. The enzyme catalyses tRNA(Arg) + L-arginine + ATP = L-arginyl-tRNA(Arg) + AMP + diphosphate. This chain is Arginine--tRNA ligase, found in Clavibacter sepedonicus (Clavibacter michiganensis subsp. sepedonicus).